The chain runs to 259 residues: MLSTPPKLPSAHGPVHFPRRSGTGMNRMARSATAVKTLAGLSFKRERAVLKSGMAPVAGADEAGRGPLAGPVVAAAVILDPKRIPAGLDDSKKLTATRREALFDEICATAEVSVVMAPPSRIDRDNIRQATLWALANAVKGLPEDPRLVFVDGNDRPPLECEVEMVIGGDGLIASIAAASIVAKVTRDRLMVGLGAAFPGYGFERHMGYGTAEHGAALRRLGPCRHHRTSFAPVRAQQLVLFETEMLEIEAEPLVDALV.

The segment at 1 to 26 (MLSTPPKLPSAHGPVHFPRRSGTGMN) is disordered. The region spanning 55 to 243 (APVAGADEAG…VRAQQLVLFE (189 aa)) is the RNase H type-2 domain. Positions 61, 62, and 152 each coordinate a divalent metal cation.

This sequence belongs to the RNase HII family. It depends on Mn(2+) as a cofactor. Mg(2+) is required as a cofactor.

Its subcellular location is the cytoplasm. The enzyme catalyses Endonucleolytic cleavage to 5'-phosphomonoester.. In terms of biological role, endonuclease that specifically degrades the RNA of RNA-DNA hybrids. The sequence is that of Ribonuclease HII from Azorhizobium caulinodans (strain ATCC 43989 / DSM 5975 / JCM 20966 / LMG 6465 / NBRC 14845 / NCIMB 13405 / ORS 571).